Here is a 588-residue protein sequence, read N- to C-terminus: Probable fumarate reductase Ifc3 (588 aa).

The signal sequence occupies residues 1–22 (MKLKYLVSAMALVVLSSGTAMA). Heme c-binding residues include H31, C37, C40, H41, C58, C61, H62, H78, H81, C87, C90, H91, G93, H94, C101, C104, and H105. The flavoprotein-like stretch occupies residues 135 to 588 (AIAAGPSETT…DNAAKHALDK (454 aa)). Residues A154, D173, N181, S182, G187, and G188 each contribute to the FAD site. G187 is a fumarate binding site. G187 is a binding site for succinate. R218 is a binding site for heme c. FAD contacts are provided by V295 and D361. Succinate contacts are provided by H382, S394, and E395. Fumarate is bound by residues S394 and E395. The active-site Proton donor is R419. H521 contacts fumarate. H521 serves as a coordination point for succinate. E551 serves as a coordination point for FAD. Fumarate is bound by residues R561 and G564. The succinate site is built by R561 and G564. G564, A566, and I567 together coordinate FAD.

In terms of assembly, homodimer. FAD is required as a cofactor. Heme c serves as cofactor.

It is found in the periplasm. In terms of biological role, flavocytochrome that catalyzes the reduction of fumarate to succinate in vitro. Is essentially unidirectional, catalyzing only fumarate reduction. In vitro, can use the artificial electron donor methyl viologen. May be involved in an alternative route for electron transport to Fe(3+). The polypeptide is Probable fumarate reductase Ifc3 (Shewanella frigidimarina (strain NCIMB 400)).